We begin with the raw amino-acid sequence, 267 residues long: Hydroxyethylthiazole kinase (267 aa).

M46 contributes to the substrate binding site. ATP-binding residues include R122 and S168. Residue G195 participates in substrate binding.

Belongs to the Thz kinase family. The cofactor is Mg(2+).

It catalyses the reaction 5-(2-hydroxyethyl)-4-methylthiazole + ATP = 4-methyl-5-(2-phosphooxyethyl)-thiazole + ADP + H(+). It participates in cofactor biosynthesis; thiamine diphosphate biosynthesis; 4-methyl-5-(2-phosphoethyl)-thiazole from 5-(2-hydroxyethyl)-4-methylthiazole: step 1/1. Catalyzes the phosphorylation of the hydroxyl group of 4-methyl-5-beta-hydroxyethylthiazole (THZ). The polypeptide is Hydroxyethylthiazole kinase (Nitratidesulfovibrio vulgaris (strain DSM 19637 / Miyazaki F) (Desulfovibrio vulgaris)).